Reading from the N-terminus, the 193-residue chain is Interleukin-18 (193 aa).

The propeptide occupies 1 to 36; sequence MAANLIEDNCINLVKMKFVNNTLYFKAESDEGLESD.

It belongs to the IL-1 family. Forms a ternary complex with ligand-binding receptor subunit IL18R1 and signaling receptor subunit IL18RAP at the plasma membrane. Mature IL18 first binds to IL18R1 forming a low affinity binary complex, which then interacts with IL18RAP to form a high affinity ternary complex that signals inside the cell. Interacts with cargo receptor TMED10; the interaction mediates the translocation from the cytoplasm into the ERGIC (endoplasmic reticulum-Golgi intermediate compartment) and thereby secretion. Post-translationally, the pro-IL-18 precursor is processed by CASP1, CASP4 or CASP5 to yield its mature, active form. The pro-IL-18 precursor features autoinhibitory interactions between the propeptide and the post-cleavage-site region, preventing recognition by the IL18R1 receptor. Processing by CASP1, CASP4 or CASP5 induces conformational changes to generate critical receptor-binding sites. The mature form is then secreted and released in the extracellular milieu by passing through the gasdermin-D (GSDMD) pore. In contrast, cleavage by CASP3 inactivates IL18.

The protein resides in the cytoplasm. The protein localises to the cytosol. It is found in the secreted. In terms of biological role, pro-inflammatory cytokine primarily involved in epithelial barrier repair, polarized T-helper 1 (Th1) cell and natural killer (NK) cell immune responses. Upon binding to IL18R1 and IL18RAP, forms a signaling ternary complex which activates NF-kappa-B, triggering synthesis of inflammatory mediators. Synergizes with IL12/interleukin-12 to induce IFNG synthesis from T-helper 1 (Th1) cells and natural killer (NK) cells. Involved in transduction of inflammation downstream of pyroptosis: its mature form is specifically released in the extracellular milieu by passing through the gasdermin-D (GSDMD) pore. The chain is Interleukin-18 (IL18) from Canis lupus familiaris (Dog).